Here is a 425-residue protein sequence, read N- to C-terminus: MKPVWQKYIEIINQVVKPALGCTEPIAAAYGAAVAVQELGCSVPDSLEVFVSDNLYKNSMGVFVPGTGKIGLAIAAASGAIGGNADAGLEVLAAITPEQVLQAQEMIDAGKVSVKRTVTDEFIYCCVIAKFEGRESLVKICGGHTLIVEKQLNGKINFIADESSATSTGSICEGVDINIASIYEFATQVELEKIAFILQAADLNTKLSDEGMTNSYGLEVGRTMKKSIDEGILSNDLLNKIVMETAAASDARMGGATLPAMSNLGSGNQGIAATIPVVIAAKHYKNSDEQLARALILSHLGAIYIKSHYPPLSAFCGNTVTSAAAAMAMVYLAGGSFEQSCFAIQNVISDSSGMVCDGAKASCAMKVSTSSCAAVRAFLMAMNSRSVSGQGIIAKDVEQTIINIGQMISHGMPSTDTTIINIMSA.

It belongs to the UPF0597 family.

The sequence is that of UPF0597 protein Swoo_4889 from Shewanella woodyi (strain ATCC 51908 / MS32).